Consider the following 331-residue polypeptide: Glycerol-3-phosphate dehydrogenase [NAD(P)+] (331 aa).

Positions 10, 11, 31, 32, and 105 each coordinate NADPH. The sn-glycerol 3-phosphate site is built by K105 and G135. Position 139 (A139) interacts with NADPH. Sn-glycerol 3-phosphate is bound by residues K190, D243, S253, R254, and N255. K190 (proton acceptor) is an active-site residue. NADPH is bound at residue R254. NADPH is bound by residues V279 and E281.

The protein belongs to the NAD-dependent glycerol-3-phosphate dehydrogenase family.

It is found in the cytoplasm. The catalysed reaction is sn-glycerol 3-phosphate + NAD(+) = dihydroxyacetone phosphate + NADH + H(+). The enzyme catalyses sn-glycerol 3-phosphate + NADP(+) = dihydroxyacetone phosphate + NADPH + H(+). Its pathway is membrane lipid metabolism; glycerophospholipid metabolism. Catalyzes the reduction of the glycolytic intermediate dihydroxyacetone phosphate (DHAP) to sn-glycerol 3-phosphate (G3P), the key precursor for phospholipid synthesis. The protein is Glycerol-3-phosphate dehydrogenase [NAD(P)+] of Corynebacterium diphtheriae (strain ATCC 700971 / NCTC 13129 / Biotype gravis).